The following is a 178-amino-acid chain: MGAFRFHQYQVVGRALPTEKDVQPKIYRMKLWATNEVRAKSKFWYFLRKLKKVKKSNGQMLAINEIYEKNPTTIKNFGIWLRYQSRTGYHNMYKEYRDTTLNGAVEQMYTEMASRHRVRFPCIQIIKTATVPAKLCKRESTKQFHNSKIKFPLVFRKVRPPSRKLKTTYKANKPNLFM.

The protein belongs to the eukaryotic ribosomal protein eL20 family.

The sequence is that of Large ribosomal subunit protein eL20y (RPL18AB) from Arabidopsis thaliana (Mouse-ear cress).